Reading from the N-terminus, the 452-residue chain is Bifunctional protein GlmU (452 aa).

Residues 1 to 232 (MTGRSCLTIV…EDEVRGINTK (232 aa)) are pyrophosphorylase. Residues 11 to 14 (LAAG), lysine 25, glutamine 78, and 83 to 84 (GT) contribute to the UDP-N-acetyl-alpha-D-glucosamine site. Aspartate 108 contacts Mg(2+). 4 residues coordinate UDP-N-acetyl-alpha-D-glucosamine: glycine 144, glutamate 158, asparagine 173, and asparagine 230. Asparagine 230 contacts Mg(2+). The interval 233–253 (AQLAEAEQVMQARLRKEALDA) is linker. The interval 254–452 (GVTMVAPDTV…KLLAKKPKTG (199 aa)) is N-acetyltransferase. Arginine 319 and lysine 337 together coordinate UDP-N-acetyl-alpha-D-glucosamine. Histidine 349 functions as the Proton acceptor in the catalytic mechanism. Tyrosine 352 and asparagine 363 together coordinate UDP-N-acetyl-alpha-D-glucosamine. Acetyl-CoA-binding positions include alanine 366, 372 to 373 (NY), serine 391, serine 409, and arginine 426.

It in the N-terminal section; belongs to the N-acetylglucosamine-1-phosphate uridyltransferase family. This sequence in the C-terminal section; belongs to the transferase hexapeptide repeat family. Homotrimer. Mg(2+) is required as a cofactor.

Its subcellular location is the cytoplasm. The enzyme catalyses alpha-D-glucosamine 1-phosphate + acetyl-CoA = N-acetyl-alpha-D-glucosamine 1-phosphate + CoA + H(+). It catalyses the reaction N-acetyl-alpha-D-glucosamine 1-phosphate + UTP + H(+) = UDP-N-acetyl-alpha-D-glucosamine + diphosphate. Its pathway is nucleotide-sugar biosynthesis; UDP-N-acetyl-alpha-D-glucosamine biosynthesis; N-acetyl-alpha-D-glucosamine 1-phosphate from alpha-D-glucosamine 6-phosphate (route II): step 2/2. It participates in nucleotide-sugar biosynthesis; UDP-N-acetyl-alpha-D-glucosamine biosynthesis; UDP-N-acetyl-alpha-D-glucosamine from N-acetyl-alpha-D-glucosamine 1-phosphate: step 1/1. It functions in the pathway bacterial outer membrane biogenesis; LPS lipid A biosynthesis. Catalyzes the last two sequential reactions in the de novo biosynthetic pathway for UDP-N-acetylglucosamine (UDP-GlcNAc). The C-terminal domain catalyzes the transfer of acetyl group from acetyl coenzyme A to glucosamine-1-phosphate (GlcN-1-P) to produce N-acetylglucosamine-1-phosphate (GlcNAc-1-P), which is converted into UDP-GlcNAc by the transfer of uridine 5-monophosphate (from uridine 5-triphosphate), a reaction catalyzed by the N-terminal domain. The protein is Bifunctional protein GlmU of Nitrobacter hamburgensis (strain DSM 10229 / NCIMB 13809 / X14).